The following is a 460-amino-acid chain: Flavonol 3-O-glucosyltransferase (460 aa).

The active-site Proton acceptor is His23. Positions 23 and 88 each coordinate an anthocyanidin. The active-site Charge relay is the Asp123. A UDP-alpha-D-glucose-binding site is contributed by Thr145. His154 is a binding site for an anthocyanidin. 7 residues coordinate UDP-alpha-D-glucose: Ala339, Gln341, His356, Trp359, Asn360, Ser361, and Glu364. Position 379 (Gly379) interacts with an anthocyanidin. UDP-alpha-D-glucose contacts are provided by Asp380 and Gln381.

This sequence belongs to the UDP-glycosyltransferase family.

It catalyses the reaction a flavonol + UDP-alpha-D-glucose = a flavonol 3-O-beta-D-glucoside + UDP + H(+). The catalysed reaction is quercetin + UDP-alpha-D-glucose = quercetin 3-O-beta-D-glucoside + UDP + H(+). It participates in flavonoid metabolism. In terms of biological role, flavonol 3-O-glucosyltransferase that catalyzes the transfer of glucose from UDP-glucose to the 3-OH position of quercetin and kaempferol. Possesses high quercetin 3-O-glucosyltransferase activity in vitro. Catalyzes the glycosylation of anthocyanins from UDP-glucose. Also active in vitro on benzoates and benzoate derivatives. This is Flavonol 3-O-glucosyltransferase from Arabidopsis thaliana (Mouse-ear cress).